The following is a 66-amino-acid chain: Potassium channel toxin alpha-KTx 30.3 (66 aa).

The N-terminal stretch at 1 to 24 (MNKTFFLVVIMATVLVLAFDATDA) is a signal peptide. 3 disulfide bridges follow: C30-C50, C36-C55, and C40-C57.

This sequence belongs to the short scorpion toxin superfamily. Potassium channel inhibitor family. Alpha-KTx 30 subfamily. In terms of tissue distribution, expressed by the venom gland.

The protein localises to the secreted. Inhibits Kv1.3/KCNA3 channel. The chain is Potassium channel toxin alpha-KTx 30.3 from Scorpiops jendeki (Scorpion).